Consider the following 112-residue polypeptide: Putative pterin-4-alpha-carbinolamine dehydratase (112 aa).

This sequence belongs to the pterin-4-alpha-carbinolamine dehydratase family.

It carries out the reaction (4aS,6R)-4a-hydroxy-L-erythro-5,6,7,8-tetrahydrobiopterin = (6R)-L-erythro-6,7-dihydrobiopterin + H2O. The protein is Putative pterin-4-alpha-carbinolamine dehydratase of Shewanella amazonensis (strain ATCC BAA-1098 / SB2B).